Here is a 1227-residue protein sequence, read N- to C-terminus: Methionine synthase (1227 aa).

In terms of domain architecture, Hcy-binding spans 2–325; it reads SSKVEQLRAQ…EHIAAMSRAV (324 aa). 3 residues coordinate Zn(2+): Cys247, Cys310, and Cys311. One can recognise a Pterin-binding domain in the interval 356-617; it reads FVNVGERTNV…LPAELRDAVE (262 aa). The B12-binding N-terminal domain maps to 650 to 744; the sequence is QQAEWRSWDV…FIEASKEKGS (95 aa). Methylcob(III)alamin is bound by residues Glu694, 756 to 760, His759, Ser804, Thr808, and Ala860; that span reads GDVHD. The B12-binding domain maps to 746-881; the sequence is NGKMVIATVK…SDTQRDDFVA (136 aa). The 331-residue stretch at 897–1227 folds into the AdoMet activation domain; sequence KKPRTPPVTL…LAPNLGYDAD (331 aa). S-adenosyl-L-methionine-binding positions include Asp946, Arg1134, and 1189 to 1190; that span reads YF.

This sequence belongs to the vitamin-B12 dependent methionine synthase family. The cofactor is methylcob(III)alamin. Zn(2+) serves as cofactor.

It carries out the reaction (6S)-5-methyl-5,6,7,8-tetrahydrofolate + L-homocysteine = (6S)-5,6,7,8-tetrahydrofolate + L-methionine. It functions in the pathway amino-acid biosynthesis; L-methionine biosynthesis via de novo pathway; L-methionine from L-homocysteine (MetH route): step 1/1. Its function is as follows. Catalyzes the transfer of a methyl group from methyl-cobalamin to homocysteine, yielding enzyme-bound cob(I)alamin and methionine. Subsequently, remethylates the cofactor using methyltetrahydrofolate. This is Methionine synthase (metH) from Salmonella typhimurium (strain LT2 / SGSC1412 / ATCC 700720).